The following is a 174-amino-acid chain: MDPIDITYNDEVGFLDDEKRDWKTWIMKLLLLAKKEIGKDNNLEMSINFVNEDRSHEINLKYRDKDRPTDVISFAIEDGEDSIDLAAFKDDPDFQEDIGDLFMCPSVISRHSKEYGTGFDREFGYTIVHGFLHLNGYDHIEPDEAKEMFGIQGKVLEDYGLPLYPDQLDEGRGK.

Zn(2+) is bound by residues H129, H133, and H139.

This sequence belongs to the endoribonuclease YbeY family. Requires Zn(2+) as cofactor.

It is found in the cytoplasm. Single strand-specific metallo-endoribonuclease involved in late-stage 70S ribosome quality control and in maturation of the 3' terminus of the 16S rRNA. This chain is Endoribonuclease YbeY, found in Lactobacillus acidophilus (strain ATCC 700396 / NCK56 / N2 / NCFM).